Here is a 525-residue protein sequence, read N- to C-terminus: Bifunctional pantoate ligase/cytidylate kinase (525 aa).

Residues 1-292 (MDNVPIIRTV…VGSARLIDNM (292 aa)) form a pantoate--beta-alanine ligase region. 44 to 51 (MGALHAGH) is a binding site for ATP. Residue histidine 51 is the Proton donor of the active site. Glutamine 75 serves as a coordination point for (R)-pantoate. Glutamine 75 lines the beta-alanine pocket. 162–165 (GQKD) contributes to the ATP binding site. Glutamine 168 lines the (R)-pantoate pocket. ATP-binding positions include isoleucine 191 and 199 to 202 (LSSR). Residues 293 to 525 (LLDARLPILA…LYQERFPDRA (233 aa)) are cytidylate kinase.

The protein in the N-terminal section; belongs to the pantothenate synthetase family. It in the C-terminal section; belongs to the cytidylate kinase family. Type 1 subfamily.

It is found in the cytoplasm. It carries out the reaction (R)-pantoate + beta-alanine + ATP = (R)-pantothenate + AMP + diphosphate + H(+). The catalysed reaction is CMP + ATP = CDP + ADP. The enzyme catalyses dCMP + ATP = dCDP + ADP. It participates in cofactor biosynthesis; (R)-pantothenate biosynthesis; (R)-pantothenate from (R)-pantoate and beta-alanine: step 1/1. Catalyzes the condensation of pantoate with beta-alanine in an ATP-dependent reaction via a pantoyl-adenylate intermediate. In terms of biological role, catalyzes the transfer of a phosphate group from ATP to either CMP or dCMP to form CDP or dCDP and ADP, respectively. The chain is Bifunctional pantoate ligase/cytidylate kinase from Acaryochloris marina (strain MBIC 11017).